The sequence spans 509 residues: MEEIQRYLQPDRSQQHNFLYPLIFQEYIYALAHDHGLNRNRSILLENPGYNNKLSFLIVKRLITRMYQQNHFLISTNDSNKNSFLGCNKSLYSQMISEGFAFIVEIPFSLRLISSLSSFEGKKIFKSHNLRSIHSTFPFLEDNFSHLNYVLDILIPYPVHLEILVQTLRYWVKDASSLHLLRFFLHEYWNLNSLITSKKPGYSFSKKNQRFFFFLYNSYVYECESTFVFLRNQSSHLRSTSFGALLERIYFYGKIERLVEVFAKDFQVTLWLFKDPFMHYVRYQGKSILASKGTFLLMNKWKFYLVNFWQCHFSLCFHTGRIHINQLSNHSRDFMGYLSSVRLNPSMVRSQMLENSFLINNAIKKFDTLVPIIPLIGSLAKANFCTVLGHPISKPVWSDLSDSDIIDRFGRICRNLFHYYSGSSKKKTLYRIKYILRLSCARTLARKHKSTVRTFLKRSGSELLEEFLTSEEQVLSLTFPRASSSLWGVYRSRIWYLDIFCINDLANYQ.

The protein belongs to the intron maturase 2 family. MatK subfamily.

The protein resides in the plastid. It is found in the chloroplast. Usually encoded in the trnK tRNA gene intron. Probably assists in splicing its own and other chloroplast group II introns. This chain is Maturase K, found in Nicotiana plumbaginifolia (Leadwort-leaved tobacco).